A 125-amino-acid polypeptide reads, in one-letter code: C-X-C motif chemokine 9 (125 aa).

The first 21 residues, 1 to 21 (MKKSAPLFLGIIFLTLTGVQG), serve as a signal peptide directing secretion. Cystine bridges form between cysteine 30–cysteine 57 and cysteine 32–cysteine 73. Residues 91–125 (QVNQKKKQRKGKKYKKTKKVPKVKRSQRPSQKKTT) are disordered. Residues 93–125 (NQKKKQRKGKKYKKTKKVPKVKRSQRPSQKKTT) show a composition bias toward basic residues.

The protein belongs to the intercrine alpha (chemokine CxC) family.

It localises to the secreted. Functionally, cytokine that affects the growth, movement, or activation state of cells that participate in immune and inflammatory response. Chemotactic for activated T-cells. Binds to CXCR3. The protein is C-X-C motif chemokine 9 (CXCL9) of Bos taurus (Bovine).